The sequence spans 126 residues: uncharacterized protein (126 aa).

This is an uncharacterized protein from Salmonella typhi.